The sequence spans 294 residues: DEP domain-containing protein 4 (294 aa).

The region spanning 71–162 (LQAQVEIKRR…SNISLYRFLG (92 aa)) is the DEP domain.

The polypeptide is DEP domain-containing protein 4 (DEPDC4) (Homo sapiens (Human)).